We begin with the raw amino-acid sequence, 155 residues long: Small ribosomal subunit protein uS7cz/uS7cy (155 aa).

The protein belongs to the universal ribosomal protein uS7 family. As to quaternary structure, part of the 30S ribosomal subunit.

It is found in the plastid. The protein localises to the chloroplast. Its function is as follows. One of the primary rRNA binding proteins, it binds directly to 16S rRNA where it nucleates assembly of the head domain of the 30S subunit. The sequence is that of Small ribosomal subunit protein uS7cz/uS7cy (rps7-A) from Atropa belladonna (Belladonna).